Consider the following 343-residue polypeptide: Uroporphyrinogen decarboxylase (343 aa).

Substrate is bound by residues 23–27 (RQAGR), phenylalanine 42, aspartate 73, tyrosine 150, serine 205, and histidine 322.

It belongs to the uroporphyrinogen decarboxylase family. In terms of assembly, homodimer.

The protein localises to the cytoplasm. The catalysed reaction is uroporphyrinogen III + 4 H(+) = coproporphyrinogen III + 4 CO2. It participates in porphyrin-containing compound metabolism; protoporphyrin-IX biosynthesis; coproporphyrinogen-III from 5-aminolevulinate: step 4/4. With respect to regulation, inhibited by N-ethyl-maleimide and phenylglyoxal. In terms of biological role, catalyzes the decarboxylation of four acetate groups of uroporphyrinogen-III to yield coproporphyrinogen-III. The chain is Uroporphyrinogen decarboxylase (hemE) from Cereibacter sphaeroides (strain ATCC 17023 / DSM 158 / JCM 6121 / CCUG 31486 / LMG 2827 / NBRC 12203 / NCIMB 8253 / ATH 2.4.1.) (Rhodobacter sphaeroides).